Here is a 162-residue protein sequence, read N- to C-terminus: D-aminoacyl-tRNA deacylase (162 aa).

The Gly-cisPro motif, important for rejection of L-amino acids signature appears at 145–146 (GP).

This sequence belongs to the DTD family. In terms of assembly, homodimer.

Its subcellular location is the cytoplasm. The enzyme catalyses glycyl-tRNA(Ala) + H2O = tRNA(Ala) + glycine + H(+). The catalysed reaction is a D-aminoacyl-tRNA + H2O = a tRNA + a D-alpha-amino acid + H(+). An aminoacyl-tRNA editing enzyme that deacylates mischarged D-aminoacyl-tRNAs. Also deacylates mischarged glycyl-tRNA(Ala), protecting cells against glycine mischarging by AlaRS. Acts via tRNA-based rather than protein-based catalysis; rejects L-amino acids rather than detecting D-amino acids in the active site. By recycling D-aminoacyl-tRNA to D-amino acids and free tRNA molecules, this enzyme counteracts the toxicity associated with the formation of D-aminoacyl-tRNA entities in vivo and helps enforce protein L-homochirality. This is D-aminoacyl-tRNA deacylase from Bifidobacterium longum (strain DJO10A).